Here is a 318-residue protein sequence, read N- to C-terminus: Cytosolic Fe-S cluster assembly factor Nubp1 homolog (318 aa).

The segment covering 1–15 has biased composition (basic and acidic residues); it reads MSAPEVENKPADAPE. Positions 1-29 are disordered; sequence MSAPEVENKPADAPEHCPGTESENAGKAS. [4Fe-4S] cluster-binding residues include cysteine 17, cysteine 31, cysteine 34, and cysteine 40. 70 to 77 is a binding site for ATP; it reads GKGGVGKS. [4Fe-4S] cluster contacts are provided by cysteine 245 and cysteine 248.

This sequence belongs to the Mrp/NBP35 ATP-binding proteins family. NUBP1/NBP35 subfamily. Heterotetramer of 2 Nubp1 and 2 Nubp2 chains. It depends on [4Fe-4S] cluster as a cofactor.

Its subcellular location is the cytoplasm. In terms of biological role, component of the cytosolic iron-sulfur (Fe/S) protein assembly (CIA) machinery. Required for maturation of extramitochondrial Fe-S proteins. The Nubp1-Nubp2 heterotetramer forms a Fe-S scaffold complex, mediating the de novo assembly of an Fe-S cluster and its transfer to target apoproteins. The chain is Cytosolic Fe-S cluster assembly factor Nubp1 homolog from Aedes aegypti (Yellowfever mosquito).